The chain runs to 945 residues: Nonsense-mediated mRNA decay factor SMG8 (945 aa).

Disordered stretches follow at residues 563-604 (RAEP…SANE) and 633-671 (AEAE…ERSA).

The protein belongs to the SMG8 family.

Functionally, involved in nonsense-mediated decay (NMD) of mRNAs containing premature stop codons. Probable component of kinase complex containing nonC and recruited to stalled ribosomes. The sequence is that of Nonsense-mediated mRNA decay factor SMG8 from Drosophila grimshawi (Hawaiian fruit fly).